We begin with the raw amino-acid sequence, 800 residues long: Probable replication endonuclease from prophage-like region (800 aa).

Residues tyrosine 503 and tyrosine 507 each act as O-(5'-phospho-DNA)-tyrosine intermediate in the active site.

The protein belongs to the phage GPA family.

In terms of biological role, possible endonuclease which induces a single-strand cut and initiates DNA replication. This is Probable replication endonuclease from prophage-like region from Salmonella paratyphi A (strain ATCC 9150 / SARB42).